Consider the following 328-residue polypeptide: D-cysteine desulfhydrase (328 aa).

Lysine 51 is subject to N6-(pyridoxal phosphate)lysine.

Belongs to the ACC deaminase/D-cysteine desulfhydrase family. As to quaternary structure, homodimer. The cofactor is pyridoxal 5'-phosphate.

It carries out the reaction D-cysteine + H2O = hydrogen sulfide + pyruvate + NH4(+) + H(+). Functionally, catalyzes the alpha,beta-elimination reaction of D-cysteine and of several D-cysteine derivatives. It could be a defense mechanism against D-cysteine. The polypeptide is D-cysteine desulfhydrase (Escherichia coli (strain SMS-3-5 / SECEC)).